The primary structure comprises 621 residues: MTDNAPITFDGKRFAAHLSMAPGVYCMYAADDTLLYVGKAGALRKRVASYFNGTPKNTRLTAMLAQVVRMDVTITRNEAEALLLENQLIKSLAPRYNVLLRDDKSYPYVLLTREAWPRIALHRGPQIVPGRYFGPYPGVTAVRDMLNLIHKLFKLRSCEDSVFRNRSRPCLQYQIGRCSAPCVNVVTHDNYTEAVRRVTLFLEGKSDLLAEELIQAMQVASEHLEFEQAARLRDLLTSLRSMQNRQYVDGRAADLDVLACAALSGHACVLLLSFRDGRNLGTRMFFPKTNGEERTAEILSAFVSQYYAEYPPPPEILLDQEIPDHTLLEAAFSRSSAHKISLRWNVRGERAGYVELAVRNAQVALSTELTSQRAQRVRSEAVRQLLGLEEPIKRVECFDISHTMGEATVASCVVFDAVGPVRSQYRRYNITGITPGDDYAAMRQAIERRFRRAVEEDKQGERPDVLFIDGGAGQLAQAKMALNAVGVESVLLVGVSKGEERRAGHETLIMLDGQELHPGAASPALQFIQQVRDEAHRFAITGHRARRQKTRMTSKLEDIPGIGSRRRANLLKHFGGLAGVKAAGQTEIARVEGISTALAAKIYASLHGLSKSDAVNASRVS.

In terms of domain architecture, GIY-YIG spans 20-98 (MAPGVYCMYA…IKSLAPRYNV (79 aa)). Residues 207–242 (DLLAEELIQAMQVASEHLEFEQAARLRDLLTSLRSM) enclose the UVR domain.

It belongs to the UvrC family. As to quaternary structure, interacts with UvrB in an incision complex.

The protein localises to the cytoplasm. Its function is as follows. The UvrABC repair system catalyzes the recognition and processing of DNA lesions. UvrC both incises the 5' and 3' sides of the lesion. The N-terminal half is responsible for the 3' incision and the C-terminal half is responsible for the 5' incision. The protein is UvrABC system protein C of Xylella fastidiosa (strain 9a5c).